We begin with the raw amino-acid sequence, 396 residues long: Putative isochorismate synthase (396 aa).

It belongs to the isochorismate synthase family.

It carries out the reaction chorismate = isochorismate. It functions in the pathway siderophore biosynthesis; amonabactin biosynthesis. Involved in the synthesis of amonabactin, a phenolate siderophore containing 2,3-dihydroxybenzoic acid (2,3-DHB). In Aeromonas hydrophila, this protein is Putative isochorismate synthase (amoA).